Reading from the N-terminus, the 970-residue chain is Sodium/calcium exchanger 1 (970 aa).

Positions 1-32 (MLQLRLLPTFSMGCHLLAVVALLFSHVDLISA) are cleaved as a signal peptide. The Extracellular segment spans residues 33 to 71 (ETEMEGEGNETGECTGSYYCKKGVILPIWEPQDPSFGDK). The N-linked (GlcNAc...) asparagine glycan is linked to N41. Residues 72–92 (IARATVYFVAMVYMFLGVSII) form a helical membrane-spanning segment. The Cytoplasmic segment spans residues 93-133 (ADRFMSSIEVITSQEKEITIKKPNGETTKTTVRIWNETVSN). A helical transmembrane segment spans residues 134-154 (LTLMALGSSAPEILLSVIEVC). The stretch at 138–178 (ALGSSAPEILLSVIEVCGHNFTAGDLGPSTIVGSAAFNMFI) is one Alpha-1 repeat. Residues 155–167 (GHNFTAGDLGPST) are Extracellular-facing. N-linked (GlcNAc...) asparagine glycosylation occurs at N157. A helical transmembrane segment spans residues 168 to 188 (IVGSAAFNMFIIIALCVYVVP). Residues 189 to 201 (DGETRKIKHLRVF) lie on the Cytoplasmic side of the membrane. Residues 202–222 (FVTAAWSIFAYTWLYIILSVI) form a helical membrane-spanning segment. Topologically, residues 223–228 (SPGVVE) are extracellular. Residues 229-249 (VWEGLLTFFFFPICVVFAWVA) traverse the membrane as a helical segment. At 250-797 (DRRLLFYKYV…FVPPTEYWNG (548 aa)) the chain is on the cytoplasmic side. Residues 251–270 (RRLLFYKYVYKRYRAGKQRG) form a putative calmodulin-binding region region. Phosphoserine is present on residues S282 and S389. Calx-beta domains are found at residues 393 to 493 (VNTE…VHLS) and 524 to 624 (ATVT…LEIG). E417, D453, D478, D479, I481, E483, E486, D530, D531, D532, E548, D584, D610, E611, E612, and E715 together coordinate Ca(2+). Residues 798–818 (WACFIVSILMIGILTAFIGDL) form a helical membrane-spanning segment. Residues 819 to 821 (ASH) are Extracellular-facing. Residues 822–842 (FGCTIGLKDSVTAVVFVALGT) form a helical membrane-spanning segment. One copy of the Alpha-2 repeat lies at 839–875 (ALGTSVPDTFASKVAATQDQYADASIGNVTGSNAVNV). Over 843–871 (SVPDTFASKVAATQDQYADASIGNVTGSN) the chain is Cytoplasmic. A helical membrane pass occupies residues 872–892 (AVNVFLGIGVAWSIAAIYHAA). Residues 893 to 903 (NGEQFKVSPGT) are Extracellular-facing. The helical transmembrane segment at 904-924 (LAFSVTLFTIFAFINVGVLLY) threads the bilayer. At 925-941 (RRRPEIGGELGGPRTAK) the chain is on the cytoplasmic side. A helical transmembrane segment spans residues 942 to 962 (LLTSCLFVLLWLLYIFFSSLE). Residues 963-970 (AYCHIKGF) are Extracellular-facing.

This sequence belongs to the Ca(2+):cation antiporter (CaCA) (TC 2.A.19) family. SLC8 subfamily. In terms of tissue distribution, cardiac sarcolemma (at protein level).

The protein localises to the cell membrane. It is found in the sarcolemma. It carries out the reaction Ca(2+)(in) + 3 Na(+)(out) = Ca(2+)(out) + 3 Na(+)(in). Its activity is regulated as follows. Activated by micromolar levels of Ca(2+). In the absence of regulatory Ca(2+), channels open rapidly, and then inactivate rapidly. Inactivation is enhanced by Na(+) and is inhibited by micromolar levels of Ca(2+). Mediates the exchange of one Ca(2+) ion against three to four Na(+) ions across the cell membrane, and thereby contributes to the regulation of cytoplasmic Ca(2+) levels and Ca(2+)-dependent cellular processes. Contributes to Ca(2+) transport during excitation-contraction coupling in muscle. In a first phase, voltage-gated channels mediate the rapid increase of cytoplasmic Ca(2+) levels due to release of Ca(2+) stores from the endoplasmic reticulum. SLC8A1 mediates the export of Ca(2+) from the cell during the next phase, so that cytoplasmic Ca(2+) levels rapidly return to baseline. Required for normal embryonic heart development and the onset of heart contractions. The protein is Sodium/calcium exchanger 1 (SLC8A1) of Canis lupus familiaris (Dog).